The sequence spans 219 residues: GTP cyclohydrolase 1 (219 aa).

A disordered region spans residues 1-37 (MDAVLKSLSVRLPDAADKRSDTGRPERVTERPTRQEA). Basic and acidic residues predominate over residues 14–37 (DAADKRSDTGRPERVTERPTRQEA). 3 residues coordinate Zn(2+): cysteine 108, histidine 111, and cysteine 179.

This sequence belongs to the GTP cyclohydrolase I family. In terms of assembly, homomer.

It carries out the reaction GTP + H2O = 7,8-dihydroneopterin 3'-triphosphate + formate + H(+). It functions in the pathway cofactor biosynthesis; 7,8-dihydroneopterin triphosphate biosynthesis; 7,8-dihydroneopterin triphosphate from GTP: step 1/1. This Methylobacterium sp. (strain 4-46) protein is GTP cyclohydrolase 1.